Consider the following 407-residue polypeptide: Arginine biosynthesis bifunctional protein ArgJ (407 aa).

The substrate site is built by Thr-154, Lys-180, Thr-191, Glu-278, Asn-402, and Ser-407. The active-site Nucleophile is the Thr-191.

It belongs to the ArgJ family. In terms of assembly, heterotetramer of two alpha and two beta chains.

The protein localises to the cytoplasm. The enzyme catalyses N(2)-acetyl-L-ornithine + L-glutamate = N-acetyl-L-glutamate + L-ornithine. The catalysed reaction is L-glutamate + acetyl-CoA = N-acetyl-L-glutamate + CoA + H(+). It participates in amino-acid biosynthesis; L-arginine biosynthesis; L-ornithine and N-acetyl-L-glutamate from L-glutamate and N(2)-acetyl-L-ornithine (cyclic): step 1/1. Its pathway is amino-acid biosynthesis; L-arginine biosynthesis; N(2)-acetyl-L-ornithine from L-glutamate: step 1/4. Its function is as follows. Catalyzes two activities which are involved in the cyclic version of arginine biosynthesis: the synthesis of N-acetylglutamate from glutamate and acetyl-CoA as the acetyl donor, and of ornithine by transacetylation between N(2)-acetylornithine and glutamate. The chain is Arginine biosynthesis bifunctional protein ArgJ from Psychrobacter arcticus (strain DSM 17307 / VKM B-2377 / 273-4).